Reading from the N-terminus, the 96-residue chain is UPF0729 protein AGAP000931 (96 aa).

The interval 65–96 (VPPGHDPVGPTVAADTATSDAVDDAASSKKTL) is disordered. Residues 75 to 96 (TVAADTATSDAVDDAASSKKTL) are compositionally biased toward low complexity.

This sequence belongs to the UPF0729 family.

In Anopheles gambiae (African malaria mosquito), this protein is UPF0729 protein AGAP000931.